Consider the following 439-residue polypeptide: Rho GTPase-activating protein 1 (439 aa).

Position 1 is an N-acetylmethionine (Met1). Residues 28–48 are compositionally biased toward basic and acidic residues; it reads IDEKNWPSDEMPDFPKSDDSK. The disordered stretch occupies residues 28 to 55; the sequence is IDEKNWPSDEMPDFPKSDDSKSSSPEPV. 4 positions are modified to phosphoserine: Ser44, Ser47, Ser50, and Ser51. The CRAL-TRIO domain occupies 63-218; that stretch reads PYYDIARHQI…QVLKYDDFLK (156 aa). At Tyr65 the chain carries Phosphotyrosine. Residue Lys80 is modified to N6-acetyllysine. The short motif at 228–238 is the SH3-binding element; the sequence is PKPMPPRPPLP. Residues 244 to 431 enclose the Rho-GAP domain; it reads VSLQHLQEKS…FLLDHQGELF (188 aa).

As to quaternary structure, found in a complex with XPO7, EIF4A1, ARHGAP1, VPS26A, VPS29, VPS35 and SFN. Interacts with BNIPL.

The protein resides in the cytoplasm. Functionally, GTPase activator for the Rho, Rac and Cdc42 proteins, converting them to the putatively inactive GDP-bound state. Cdc42 seems to be the preferred substrate. This chain is Rho GTPase-activating protein 1 (Arhgap1), found in Mus musculus (Mouse).